Reading from the N-terminus, the 96-residue chain is UPF0235 protein YggU (96 aa).

Belongs to the UPF0235 family.

The sequence is that of UPF0235 protein YggU from Escherichia coli O127:H6 (strain E2348/69 / EPEC).